The chain runs to 110 residues: Protein C-ets-2 (110 aa).

The segment at residues 1–84 (SGPIQLWQFL…AGKRYVYRFV (84 aa)) is a DNA-binding region (ETS).

Belongs to the ETS family.

Its subcellular location is the nucleus. Its function is as follows. Probable transcription factor. This is Protein C-ets-2 (ETS-2) from Lytechinus variegatus (Green sea urchin).